The following is a 366-amino-acid chain: Putative type II methyltransferase M.MjaORF1200P (366 aa).

The 362-residue stretch at 5–366 (LKFIDLFCGC…IARVIKENLK (362 aa)) folds into the SAM-dependent MTase C5-type domain. The active site involves C133.

The protein belongs to the class I-like SAM-binding methyltransferase superfamily. C5-methyltransferase family.

The catalysed reaction is a 2'-deoxycytidine in DNA + S-adenosyl-L-methionine = a 5-methyl-2'-deoxycytidine in DNA + S-adenosyl-L-homocysteine + H(+). Functionally, a putative methylase that probably protects DNA from cleavage by the MjaORF1200P endonuclease. This chain is Putative type II methyltransferase M.MjaORF1200P, found in Methanocaldococcus jannaschii (strain ATCC 43067 / DSM 2661 / JAL-1 / JCM 10045 / NBRC 100440) (Methanococcus jannaschii).